Reading from the N-terminus, the 218-residue chain is MKLILLGAPGAGKGTQATFICQKYGIPQISTGDMLRAAVKAGTPLGIEAKKVMDSGGLVSDDLIINLVKERIAQPDCAQGFLFDGFPRTIPQADAMKAAGVKIDYVLEIDVPFEAIIERMSGRRSHSASGRTYHVKYNPPKVEGLDDVTGEPLIQREDDKEETVAKRLEVYSAQTRPLVAYYSDWATEAPDEAPKYRAISGTGTVEEITERAFKALSN.

10–15 (GAGKGT) serves as a coordination point for ATP. The tract at residues 30–59 (STGDMLRAAVKAGTPLGIEAKKVMDSGGLV) is NMP. Residues Thr-31, Arg-36, 57–59 (GLV), 85–88 (GFPR), and Gln-92 contribute to the AMP site. The tract at residues 122–159 (GRRSHSASGRTYHVKYNPPKVEGLDDVTGEPLIQREDD) is LID. ATP is bound by residues Arg-123 and 132 to 133 (TY). AMP contacts are provided by Arg-156 and Arg-167. Gly-203 provides a ligand contact to ATP.

It belongs to the adenylate kinase family. In terms of assembly, monomer.

It localises to the cytoplasm. The catalysed reaction is AMP + ATP = 2 ADP. It participates in purine metabolism; AMP biosynthesis via salvage pathway; AMP from ADP: step 1/1. In terms of biological role, catalyzes the reversible transfer of the terminal phosphate group between ATP and AMP. Plays an important role in cellular energy homeostasis and in adenine nucleotide metabolism. The sequence is that of Adenylate kinase from Polaromonas naphthalenivorans (strain CJ2).